The following is a 114-amino-acid chain: NADH-ubiquinone oxidoreductase chain 3 (114 aa).

Transmembrane regions (helical) follow at residues 3-23 (ATILMIAMTLSTILAILSFWL), 54-74 (FFLIAILFLLFDLEIALLLPF), and 85-105 (IVILWAALILTLLTLGLIYEW).

Belongs to the complex I subunit 3 family.

The protein resides in the mitochondrion membrane. The enzyme catalyses a ubiquinone + NADH + 5 H(+)(in) = a ubiquinol + NAD(+) + 4 H(+)(out). Its function is as follows. Core subunit of the mitochondrial membrane respiratory chain NADH dehydrogenase (Complex I) that is believed to belong to the minimal assembly required for catalysis. Complex I functions in the transfer of electrons from NADH to the respiratory chain. The immediate electron acceptor for the enzyme is believed to be ubiquinone. This chain is NADH-ubiquinone oxidoreductase chain 3 (mt-nd3), found in Xenopus laevis (African clawed frog).